Here is a 418-residue protein sequence, read N- to C-terminus: Tryptophan synthase beta chain (418 aa).

Residues 1-18 (MTSTLPNASTPDPASLQP) are compositionally biased toward polar residues. Positions 1–23 (MTSTLPNASTPDPASLQPSVRPG) are disordered. Lysine 111 carries the post-translational modification N6-(pyridoxal phosphate)lysine.

It belongs to the TrpB family. As to quaternary structure, tetramer of two alpha and two beta chains. Requires pyridoxal 5'-phosphate as cofactor.

It carries out the reaction (1S,2R)-1-C-(indol-3-yl)glycerol 3-phosphate + L-serine = D-glyceraldehyde 3-phosphate + L-tryptophan + H2O. Its pathway is amino-acid biosynthesis; L-tryptophan biosynthesis; L-tryptophan from chorismate: step 5/5. Functionally, the beta subunit is responsible for the synthesis of L-tryptophan from indole and L-serine. The protein is Tryptophan synthase beta chain of Parasynechococcus marenigrum (strain WH8102).